The chain runs to 79 residues: Sec-independent protein translocase protein TatA (79 aa).

Residues 1–21 traverse the membrane as a helical segment; the sequence is MGFSTTHLLIFLVIIIVIFGT. The tract at residues 43–63 is disordered; it reads KEGSDKAADAPAAAPQQVASS. Positions 51–63 are enriched in low complexity; sequence DAPAAAPQQVASS.

Belongs to the TatA/E family. As to quaternary structure, the Tat system comprises two distinct complexes: a TatABC complex, containing multiple copies of TatA, TatB and TatC subunits, and a separate TatA complex, containing only TatA subunits. Substrates initially bind to the TatABC complex, which probably triggers association of the separate TatA complex to form the active translocon.

It is found in the cell inner membrane. Part of the twin-arginine translocation (Tat) system that transports large folded proteins containing a characteristic twin-arginine motif in their signal peptide across membranes. TatA could form the protein-conducting channel of the Tat system. This chain is Sec-independent protein translocase protein TatA, found in Albidiferax ferrireducens (strain ATCC BAA-621 / DSM 15236 / T118) (Rhodoferax ferrireducens).